Here is a 132-residue protein sequence, read N- to C-terminus: MSAKGKTGRKKASKGTSNSAKAGLQFPVGRIGRYLKKGKYAKRVGAGAPVYLAAVLEYLCAEILELAGNAARDNKKSRITPRHIQLAVRNDEELNKFLAGVTFASGGVLPNIHNVLLPKKSQLKAGTANQDY.

Residues 1–13 (MSAKGKTGRKKAS) are compositionally biased toward basic residues. Positions 1–21 (MSAKGKTGRKKASKGTSNSAK) are disordered.

The protein belongs to the histone H2A family. The nucleosome is a histone octamer containing two molecules each of H2A, H2B, H3 and H4 assembled in one H3-H4 heterotetramer and two H2A-H2B heterodimers. The octamer wraps approximately 147 bp of DNA.

It is found in the nucleus. It localises to the chromosome. In terms of biological role, core component of nucleosome. Nucleosomes wrap and compact DNA into chromatin, limiting DNA accessibility to the cellular machineries which require DNA as a template. Histones thereby play a central role in transcription regulation, DNA repair, DNA replication and chromosomal stability. DNA accessibility is regulated via a complex set of post-translational modifications of histones, also called histone code, and nucleosome remodeling. In Plasmodium falciparum, this protein is Histone H2A.